Reading from the N-terminus, the 1092-residue chain is Probable cellulose synthase A catalytic subunit 6 [UDP-forming] (1092 aa).

Residues methionine 1–methionine 280 are Cytoplasmic-facing. Positions 42, 45, 61, 64, 69, 72, 84, and 87 each coordinate Zn(2+). The RING-type; degenerate zinc-finger motif lies at cysteine 42–lysine 88. The disordered stretch occupies residues valine 100–aspartate 123. Over residues aspartate 103 to phenylalanine 116 the composition is skewed to acidic residues. Residues isoleucine 281–valine 301 form a helical membrane-spanning segment. Residues asparagine 302 to aspartate 303 are Extracellular-facing. Residues alanine 304–leucine 324 traverse the membrane as a helical segment. The Cytoplasmic segment spans residues aspartate 325–serine 868. UDP-alpha-D-glucose contacts are provided by serine 363, lysine 369, glutamate 370, and aspartate 399. The active site involves aspartate 399. Residues valine 453 to valine 480 are a coiled coil. Residue lysine 540 participates in UDP-alpha-D-glucose binding. Residues lysine 541 and aspartate 565 each contribute to the Mn(2+) site. Aspartate 792 is a catalytic residue. A helical transmembrane segment spans residues isoleucine 869–leucine 889. The Extracellular segment spans residues leucine 890 to asparagine 901. The helical transmembrane segment at valine 902–methionine 922 threads the bilayer. The Cytoplasmic segment spans residues arginine 923 to glutamine 937. Residues phenylalanine 938 to valine 958 form a helical membrane-spanning segment. The Extracellular segment spans residues leucine 959 to threonine 987. A helical transmembrane segment spans residues threonine 988–valine 1008. Residues serine 1009–tryptophan 1019 lie on the Cytoplasmic side of the membrane. A helical membrane pass occupies residues glycine 1020–leucine 1040. Topologically, residues lysine 1041 to arginine 1049 are extracellular. The chain crosses the membrane as a helical span at residues threonine 1050 to valine 1070. The Cytoplasmic segment spans residues arginine 1071–asparagine 1092.

This sequence belongs to the glycosyltransferase 2 family. Plant cellulose synthase subfamily. The cofactor is Mn(2+). Zn(2+) is required as a cofactor.

The protein resides in the cell membrane. It catalyses the reaction [(1-&gt;4)-beta-D-glucosyl](n) + UDP-alpha-D-glucose = [(1-&gt;4)-beta-D-glucosyl](n+1) + UDP + H(+). It participates in glycan metabolism; plant cellulose biosynthesis. Its function is as follows. Probable catalytic subunit of cellulose synthase terminal complexes ('rosettes'), required for beta-1,4-glucan microfibril crystallization, a major mechanism of the cell wall formation. The sequence is that of Probable cellulose synthase A catalytic subunit 6 [UDP-forming] (CESA6) from Oryza sativa subsp. japonica (Rice).